The sequence spans 319 residues: ATP-dependent 6-phosphofructokinase (319 aa).

Gly11 contacts ATP. An ADP-binding site is contributed by 21–25 (RAVVR). Residues 72 to 73 (RC) and 102 to 105 (GEGS) each bind ATP. Glu103 is a Mg(2+) binding site. 126-128 (TID) contacts substrate. Catalysis depends on Asp128, which acts as the Proton acceptor. Lys155 serves as a coordination point for ADP. Substrate is bound by residues Arg163 and 170–172 (MGR). Residues 186–188 (GAE), Arg212, and 214–216 (KIN) each bind ADP. Substrate is bound by residues Glu223, Arg244, and 250–253 (HVQR).

The protein belongs to the phosphofructokinase type A (PFKA) family. ATP-dependent PFK group I subfamily. Prokaryotic clade 'B1' sub-subfamily. In terms of assembly, homotetramer. Requires Mg(2+) as cofactor.

It is found in the cytoplasm. It carries out the reaction beta-D-fructose 6-phosphate + ATP = beta-D-fructose 1,6-bisphosphate + ADP + H(+). It participates in carbohydrate degradation; glycolysis; D-glyceraldehyde 3-phosphate and glycerone phosphate from D-glucose: step 3/4. With respect to regulation, allosterically activated by ADP and other diphosphonucleosides, and allosterically inhibited by phosphoenolpyruvate. Catalyzes the phosphorylation of D-fructose 6-phosphate to fructose 1,6-bisphosphate by ATP, the first committing step of glycolysis. This Thermotoga neapolitana (strain ATCC 49049 / DSM 4359 / NBRC 107923 / NS-E) protein is ATP-dependent 6-phosphofructokinase.